Here is a 453-residue protein sequence, read N- to C-terminus: Chromosomal replication initiator protein DnaA (453 aa).

Residues 1–71 (MSEKEIWEKV…QAILFDVVGY (71 aa)) form a domain I, interacts with DnaA modulators region. The interval 71-114 (YEVKPHFITTEELANYSNNETATPKETTKPSTETTEDNHVLGRE) is domain II. Residues 115 to 331 (QFNAHNTFDT…GALTRLLAYS (217 aa)) are domain III, AAA+ region. Glycine 159, glycine 161, lysine 162, and threonine 163 together coordinate ATP. Residues 332-453 (QLLGKPITTE…ENLEKEIRNV (122 aa)) are domain IV, binds dsDNA.

The protein belongs to the DnaA family. In terms of assembly, oligomerizes as a right-handed, spiral filament on DNA at oriC.

It localises to the cytoplasm. In terms of biological role, plays an essential role in the initiation and regulation of chromosomal replication. ATP-DnaA binds to the origin of replication (oriC) to initiate formation of the DNA replication initiation complex once per cell cycle. Binds the DnaA box (a 9 base pair repeat at the origin) and separates the double-stranded (ds)DNA. Forms a right-handed helical filament on oriC DNA; dsDNA binds to the exterior of the filament while single-stranded (ss)DNA is stabiized in the filament's interior. The ATP-DnaA-oriC complex binds and stabilizes one strand of the AT-rich DNA unwinding element (DUE), permitting loading of DNA polymerase. After initiation quickly degrades to an ADP-DnaA complex that is not apt for DNA replication. Binds acidic phospholipids. The protein is Chromosomal replication initiator protein DnaA of Staphylococcus aureus (strain bovine RF122 / ET3-1).